Here is a 504-residue protein sequence, read N- to C-terminus: Maturase K (504 aa).

The protein belongs to the intron maturase 2 family. MatK subfamily.

Its subcellular location is the plastid. It localises to the chloroplast. Functionally, usually encoded in the trnK tRNA gene intron. Probably assists in splicing its own and other chloroplast group II introns. The chain is Maturase K from Gossypium turneri (Cotton).